The chain runs to 125 residues: Natriuretic peptide GNP1 (125 aa).

The signal sequence occupies residues 1–25 (MDPRLVRAGSLVLLLALLVQDQGAA). 2 disordered regions span residues 23–78 (GAAH…PAFK) and 105–125 (VSGMGCNKFDPNKGSSSTGKK). A propeptide spanning residues 26-85 (HPARAGQKYKPLIRRSEEDSQALGQEGDVAARAADEEEDAAGPGDALRQPAFKTLLASRE) is cleaved from the precursor. Residues cysteine 94 and cysteine 110 are joined by a disulfide bond.

This sequence belongs to the natriuretic peptide family. In terms of tissue distribution, expressed by the venom gland.

The protein resides in the secreted. Its function is as follows. Exhibits natriuretic and vasodepressor activity. Acts by stimulating cGMP. The polypeptide is Natriuretic peptide GNP1 (Varanus varius (Lace monitor lizard)).